Reading from the N-terminus, the 283-residue chain is Lysozyme-like protein 7 (283 aa).

A signal peptide spans 1-18; it reads MAHKSIVIFSVLAVLCHS. Positions 53–273 constitute a Ch-type lysozyme domain; it reads YAYALDIYVQ…AVEEDGKIYA (221 aa).

Belongs to the glycosyl hydrolase 25 family. In terms of tissue distribution, expressed in intestine. Expressed in rectal gland cells and head neurons.

Its function is as follows. Plays a role in resistance to Gram-positive bacteria B.thuringiensis and M.nematophilum and Gram-negative bacteria S.boydii or S.flexneri infection and to fungus C.neoformans infection. Plays a role in susceptibility to Gram-negative bacterium S.typhimurium infection. The chain is Lysozyme-like protein 7 from Caenorhabditis elegans.